A 750-amino-acid chain; its full sequence is Photosystem I P700 chlorophyll a apoprotein A1 (750 aa).

8 helical membrane-spanning segments follow: residues 70–93, 156–179, 195–219, 291–309, 346–369, 385–411, 433–455, and 531–549; these read VFSA…FHGA, LYCT…FHYH, LNHH…HVSL, IAHH…GHMY, WHAQ…HHMY, LSLF…IFMV, AIIS…LYIH, and FLVH…LILL. Residues Cys-573 and Cys-582 each contribute to the [4Fe-4S] cluster site. The next 2 helical transmembrane spans lie at 589-610 and 664-686; these read HVFL…HFSW and LSAY…MFLF. His-675 serves as a coordination point for chlorophyll a'. Met-683 and Tyr-691 together coordinate chlorophyll a. Trp-692 is a phylloquinone binding site. Residues 724 to 744 traverse the membrane as a helical segment; sequence AVGVTHYLLGGIATTWAFFLA.

It belongs to the PsaA/PsaB family. In terms of assembly, the PsaA/B heterodimer binds the P700 chlorophyll special pair and subsequent electron acceptors. PSI consists of a core antenna complex that captures photons, and an electron transfer chain that converts photonic excitation into a charge separation. The eukaryotic PSI reaction center is composed of at least 11 subunits. P700 is a chlorophyll a/chlorophyll a' dimer, A0 is one or more chlorophyll a, A1 is one or both phylloquinones and FX is a shared 4Fe-4S iron-sulfur center. is required as a cofactor.

The protein resides in the plastid. It is found in the chloroplast thylakoid membrane. It catalyses the reaction reduced [plastocyanin] + hnu + oxidized [2Fe-2S]-[ferredoxin] = oxidized [plastocyanin] + reduced [2Fe-2S]-[ferredoxin]. In terms of biological role, psaA and PsaB bind P700, the primary electron donor of photosystem I (PSI), as well as the electron acceptors A0, A1 and FX. PSI is a plastocyanin-ferredoxin oxidoreductase, converting photonic excitation into a charge separation, which transfers an electron from the donor P700 chlorophyll pair to the spectroscopically characterized acceptors A0, A1, FX, FA and FB in turn. Oxidized P700 is reduced on the lumenal side of the thylakoid membrane by plastocyanin. The chain is Photosystem I P700 chlorophyll a apoprotein A1 from Citrus sinensis (Sweet orange).